A 454-amino-acid polypeptide reads, in one-letter code: MSLKGNDKELHLVMFPFFAFGHITPFVQLSNKISSLYPGVKITFLAASASVSRIETMLNPSTNTKVIPLTLPRVDGLPEGVENTADASPATIGLLVVAIDLMQPQIKTLLANLKPDFVIFDFVHWWLPEIASELGIKTIYFSVYMANIVMPSTSKLTGNKPSTVEDIKALQQSYGIPVKTFEAISLMNVFKSFHDWMDKCINGCNLMLIKSCREMEGSRIDDVTKQSTRPVFLIGPVVPEPHSGELDETWANWLNRFPAKSVIYCSFGSETFLTDDQIRELALGLELTGLPFFLVLNFPANVDKSAELKRTLPDGFLERVKDKGIVHSGWVQQRHILAHDSVGCYVFHAGYGSVIEGLVNDCQLVMLPMKVDQFTNSKVIALELKAGVEVNRRDEDGYFGKDDVFEAVESVMMDTENEPAKSIRENHRKLKEFLQNDEIQKKYIADFVENLKAL.

UDP-alpha-D-glucose contacts are provided by residues S269, 330–331 (WV), 348–356 (HAGYGSVIE), and 370–373 (KVDQ).

The protein belongs to the UDP-glycosyltransferase family.

Functionally, may glycosylate diterpenes or flavonols in leaves. This is UDP-glycosyltransferase 79A2 from Stevia rebaudiana (Stevia).